Reading from the N-terminus, the 349-residue chain is 5-deoxyribose 1-phosphate isomerase (349 aa).

Substrate-binding positions include 49-51 (RGA), Arg-92, and Gln-199. The active-site Proton donor is Asp-240. 250-251 (NK) is a substrate binding site.

This sequence belongs to the EIF-2B alpha/beta/delta subunits family. DrdI subfamily.

The enzyme catalyses 5-deoxy-alpha-D-ribose 1-phosphate = 5-deoxy-D-ribulose 1-phosphate. It participates in carbohydrate degradation. Functionally, catalyzes the isomerization of 5-deoxy-alpha-D-ribose 1-phosphate to 5-deoxy-D-ribulose 1-phosphate, as part of a 5-deoxyribose salvage pathway that recycles this toxic radical SAM enzyme by-product to mainstream metabolites. The protein is 5-deoxyribose 1-phosphate isomerase of Clostridium botulinum (strain Langeland / NCTC 10281 / Type F).